Reading from the N-terminus, the 422-residue chain is MNKDKFHVIIVGGSIAGLTLAHCLHRAGISHVVLEKASEPAPQIGASVGILPNGARVLDQLQLYETIEKYIEPLETATIGYPDGFSFSSSYPKLVNERFGFPIAFLDRQKLLEILYQHYPDKSKIRLAARVISIESSAIDSEVTTEDGTIYKGHLIVGADGVHSRVRSEMWKAAQRIKPGLVTKREQRSMTVEYSCIFGISAPIKGLIVGEQVNAFFDHLTIVTIHGKNGRVYWFLIQKLDRKYIYPECPRFTAKEIGPIASDLKEVKFFKDITFGQLWDSRETASMTVLEENVFDTWYHGRMVLMGDSVHKMTPNIGQGANMAIEDAAVLSSLLSDLLQKQTQPPTNAQIERLLAQYREVRYPRVNSIYKTSRFLVRFQARDGIFNTLFGRYYAPHAGDLPADMASKTIAGGELISWMAYM.

A helical transmembrane segment spans residues 8-24 (VIIVGGSIAGLTLAHCL). FAD-binding residues include E35, G49, R108, D308, and A321.

The protein belongs to the paxM FAD-dependent monooxygenase family. FAD is required as a cofactor.

The protein localises to the membrane. It functions in the pathway secondary metabolite biosynthesis. Functionally, FAD-dependent monooxygenase; part of the gene cluster that mediates the biosynthesis of the indole diterpenes penitrems. The geranylgeranyl diphosphate (GGPP) synthase ptmG catalyzes the first step in penitrem biosynthesis via conversion of farnesyl pyrophosphate and isopentyl pyrophosphate into geranylgeranyl pyrophosphate (GGPP). Condensation of indole-3-glycerol phosphate with GGPP by the prenyl transferase ptmC then forms 3-geranylgeranylindole (3-GGI). Epoxidation by the FAD-dependent monooxygenase ptmM leads to a epoxidized-GGI that is substrate of the terpene cyclase ptmB for cyclization to yield paspaline. Paspaline is subsequently converted to 13-desoxypaxilline by the cytochrome P450 monooxygenase ptmP, the latter being then converted to paxilline by the cytochrome P450 monooxygenase ptmQ. Paxilline is converted to beta-paxitriol via C-10 ketoreduction by the short-chain dehydrogenase ptmH which can be monoprenylated at the C-20 by the indole diterpene prenyltransferase ptmD. A two-step elimination (acetylation and elimination) process performed by the O-acetyltransferase ptmV and ptmI leads to the production of the prenylated form of penijanthine. The FAD-linked oxidoreductase ptmO then converts the prenylated form of penijanthine into PC-M5 which is in turn transformed into PC-M4 by the aromatic dimethylallyltransferase ptmE. Five sequential oxidative transformations performed by the cytochrome P450 monooxygenases ptmK, ptmU, ptmL, ptmN and ptmJ yield the various penitrem compounds. PtmK, ptmU and ptmM are involved in the formation of the key bicyclic ring of penitrem C via the formation of the intermediates secopenitrem D and penitrem D. PtmL catalyzes the epoxidation of penitrem D and C to yield penitrem B and F, respectively. PtmJ catalyzes the last benzylic hydroxylation to convert penitrem B to prenitrem E and penitrem F to penitrem A. The chain is FAD-dependent monooxygenase ptmM from Penicillium ochrochloron.